Here is a 142-residue protein sequence, read N- to C-terminus: 3-hydroxyacyl-[acyl-carrier-protein] dehydratase FabZ (142 aa).

Residue His-49 is part of the active site.

The protein belongs to the thioester dehydratase family. FabZ subfamily.

The protein resides in the cytoplasm. The enzyme catalyses a (3R)-hydroxyacyl-[ACP] = a (2E)-enoyl-[ACP] + H2O. Its function is as follows. Involved in unsaturated fatty acids biosynthesis. Catalyzes the dehydration of short chain beta-hydroxyacyl-ACPs and long chain saturated and unsaturated beta-hydroxyacyl-ACPs. This Clostridium novyi (strain NT) protein is 3-hydroxyacyl-[acyl-carrier-protein] dehydratase FabZ.